A 432-amino-acid polypeptide reads, in one-letter code: Glutamyl-tRNA reductase (432 aa).

Substrate is bound by residues 49–52, Ser101, 106–108, and Gln112; these read TCNR and EPQ. The Nucleophile role is filled by Cys50. 181–186 is a binding site for NADP(+); sequence GAGETI. A disordered region spans residues 407–432; sequence FPEKPGYQHPPIATPIVRTDDADPAP.

It belongs to the glutamyl-tRNA reductase family. In terms of assembly, homodimer.

The catalysed reaction is (S)-4-amino-5-oxopentanoate + tRNA(Glu) + NADP(+) = L-glutamyl-tRNA(Glu) + NADPH + H(+). It participates in porphyrin-containing compound metabolism; protoporphyrin-IX biosynthesis; 5-aminolevulinate from L-glutamyl-tRNA(Glu): step 1/2. Catalyzes the NADPH-dependent reduction of glutamyl-tRNA(Glu) to glutamate 1-semialdehyde (GSA). In Xanthomonas oryzae pv. oryzae (strain MAFF 311018), this protein is Glutamyl-tRNA reductase.